A 97-amino-acid chain; its full sequence is Class II hydrophobin 3 (97 aa).

The first 16 residues, 1–16 (MKFFAAAALFIAGVLA), serve as a signal peptide directing secretion. 4 cysteine pairs are disulfide-bonded: Cys-30–Cys-79, Cys-40–Cys-70, Cys-41–Cys-53, and Cys-80–Cys-91.

This sequence belongs to the cerato-ulmin hydrophobin family. Homodimer. Homodimers further self-assemble to form highly ordered films at water-air interfaces through intermolecular interactions.

It is found in the secreted. It localises to the cell wall. Its function is as follows. Aerial growth, conidiation, and dispersal of filamentous fungi in the environment rely upon a capability of their secreting small amphipathic proteins called hydrophobins (HPBs) with low sequence identity. Class I can self-assemble into an outermost layer of rodlet bundles on aerial cell surfaces, conferring cellular hydrophobicity that supports fungal growth, development and dispersal; whereas Class II form highly ordered films at water-air interfaces through intermolecular interactions but contribute nothing to the rodlet structure. This Trichoderma asperellum (strain ATCC 204424 / CBS 433.97 / NBRC 101777) protein is Class II hydrophobin 3.